A 453-amino-acid chain; its full sequence is 5-hydroxytryptamine receptor 1 (453 aa).

At 1 to 36 the chain is on the extracellular side; sequence MKSLKSSTHDVPHPEHVVWAPPAYDEQHHLFFSHGT. A helical membrane pass occupies residues 37-57; the sequence is VLIGIVGSLIITVAVVGNVLV. At 58 to 74 the chain is on the cytoplasmic side; it reads CLAIFTEPILSHSKSNF. Residues 75–94 traverse the membrane as a helical segment; it reads FIVSLAVADLLLALLVMTFA. At 95-110 the chain is on the extracellular side; that stretch reads LVNDMYGYWLFGETFC. An intrachain disulfide couples C110 to C225. Residues 111 to 133 form a helical membrane-spanning segment; it reads FIWMSADVMCETASIFSICVISY. The Cytoplasmic segment spans residues 134–153; the sequence is DRLKQVQKPLHYEEFMTTTR. Residues 154 to 175 form a helical membrane-spanning segment; it reads ALLIIACLWICSFVLSFVPIFL. Residues 176–223 are Extracellular-facing; sequence EWHELSVEEIKAIFKDNKTEKEKALEAHNFSSALNQTLGDNQKSNAKH. Residues 224–244 traverse the membrane as a helical segment; it reads VCLFDVHFTYSVIYSFICFYV. At 245–301 the chain is on the cytoplasmic side; that stretch reads PCTLMLTNYLRLFLIAQTHQVRIRSLQMTNPPQLRGQGASSYRNQGTQGSKAARTLT. The helical transmembrane segment at 302–322 threads the bilayer; sequence IITGTFLACWLPFFIINPIAA. The Extracellular portion of the chain corresponds to 323–331; that stretch reads ADEHLIPLE. A helical membrane pass occupies residues 332–352; that stretch reads CFMVTIWLGYFNSSVNPIIYG. Residues 353–453 are Cytoplasmic-facing; the sequence is TSNSKFRAAF…VFDSDTAFSS (101 aa). Positions 397–428 are disordered; it reads DLSSSEHPSDACDTGRGKNSKGGDCATADPTK. The segment covering 403 to 412 has biased composition (basic and acidic residues); sequence HPSDACDTGR.

This sequence belongs to the G-protein coupled receptor 1 family. In terms of tissue distribution, reproductive system.

It is found in the cell membrane. This is one of the several different receptors for 5-hydroxytryptamine (serotonin). 5-HT plays important roles in various behavioral and physiological processes in aplysia. These include feeding, locomotion, circadian rhythm, learning and memory, synaptic plasticity, and synaptic growth. This receptor is mediated by G proteins that stimulate phospholipase C. The chain is 5-hydroxytryptamine receptor 1 (5HTB1) from Aplysia californica (California sea hare).